Consider the following 189-residue polypeptide: dCTP deaminase (189 aa).

DCTP contacts are provided by residues 112-117, 136-138, glutamine 157, tyrosine 171, and glutamine 181; these read KSTYAR and TLE. Residue glutamate 138 is the Proton donor/acceptor of the active site.

The protein belongs to the dCTP deaminase family. Homotrimer.

The enzyme catalyses dCTP + H2O + H(+) = dUTP + NH4(+). Its pathway is pyrimidine metabolism; dUMP biosynthesis; dUMP from dCTP (dUTP route): step 1/2. Its function is as follows. Catalyzes the deamination of dCTP to dUTP. This chain is dCTP deaminase, found in Burkholderia thailandensis (strain ATCC 700388 / DSM 13276 / CCUG 48851 / CIP 106301 / E264).